A 443-amino-acid chain; its full sequence is Type I restriction enzyme HindI methylase subunit (443 aa).

S-adenosyl-L-methionine-binding positions include 117–122 (QYFTPK), 146–148 (SGG), and Glu-173.

It belongs to the N(4)/N(6)-methyltransferase family. As to quaternary structure, the type I restriction/modification system is composed of three polypeptides R, M and S; the restriction enzyme has stoichiometry R(2)M(2)S(1) while the methyltransferase is M(2)S(1).

It catalyses the reaction a 2'-deoxyadenosine in DNA + S-adenosyl-L-methionine = an N(6)-methyl-2'-deoxyadenosine in DNA + S-adenosyl-L-homocysteine + H(+). The subtype gamma methyltransferase (M) subunit of a type I restriction enzyme. The M and S subunits together form a methyltransferase (MTase) that methylates adenosines in the sequence 5'-RAACN(5)TAG-3'. Methylation protects against cleavage by HindI. In the presence of the R subunit the complex can also act as an endonuclease, binding to the same target sequence but cutting the DNA some distance from this site. Whether the DNA is cut or modified depends on the methylation state of the target sequence. When the target site is unmodified, the DNA is cut. When the target site is hemimethylated, the complex acts as a maintenance MTase modifying the DNA so that both strands become methylated. After locating a non-methylated recognition site, the enzyme complex serves as a molecular motor that translocates DNA in an ATP-dependent manner until a collision occurs that triggers cleavage. The sequence is that of Type I restriction enzyme HindI methylase subunit from Haemophilus influenzae (strain ATCC 51907 / DSM 11121 / KW20 / Rd).